The following is a 156-amino-acid chain: 6,7-dimethyl-8-ribityllumazine synthase (156 aa).

Residues Phe23, Ala57 to Glu59, and Ala81 to Ile83 each bind 5-amino-6-(D-ribitylamino)uracil. Residue Gly86 to Thr87 coordinates (2S)-2-hydroxy-3-oxobutyl phosphate. His89 functions as the Proton donor in the catalytic mechanism. Phe114 serves as a coordination point for 5-amino-6-(D-ribitylamino)uracil. A (2S)-2-hydroxy-3-oxobutyl phosphate-binding site is contributed by Arg128.

The protein belongs to the DMRL synthase family.

The enzyme catalyses (2S)-2-hydroxy-3-oxobutyl phosphate + 5-amino-6-(D-ribitylamino)uracil = 6,7-dimethyl-8-(1-D-ribityl)lumazine + phosphate + 2 H2O + H(+). The protein operates within cofactor biosynthesis; riboflavin biosynthesis; riboflavin from 2-hydroxy-3-oxobutyl phosphate and 5-amino-6-(D-ribitylamino)uracil: step 1/2. In terms of biological role, catalyzes the formation of 6,7-dimethyl-8-ribityllumazine by condensation of 5-amino-6-(D-ribitylamino)uracil with 3,4-dihydroxy-2-butanone 4-phosphate. This is the penultimate step in the biosynthesis of riboflavin. This is 6,7-dimethyl-8-ribityllumazine synthase from Helicobacter pylori (strain ATCC 700392 / 26695) (Campylobacter pylori).